The sequence spans 212 residues: MSANNGWEPRTRLGKQVVEGEIDSMQEALNSGLPLKESEVVDQLVPDLEDEVLDINMVQRMTDSGRRVKFRCVVAVGNRDGLIGYAEGRDDQVGGAIQKAIDIAKLNIIDVSRGCGSWECGCGRPHTVALRTEGKAGSVEVELQPAPRGLGLAGGETVRKVLELAGIEDIWTRSSGNTRTTVNFAKATFNALQNTAEARVPERTFEKREVIE.

The S5 DRBM domain maps to 48–111 (LEDEVLDINM…DIAKLNIIDV (64 aa)).

The protein belongs to the universal ribosomal protein uS5 family. Part of the 30S ribosomal subunit. Contacts protein S4.

With S4 and S12 plays an important role in translational accuracy. This Haloarcula marismortui (strain ATCC 43049 / DSM 3752 / JCM 8966 / VKM B-1809) (Halobacterium marismortui) protein is Small ribosomal subunit protein uS5.